A 419-amino-acid chain; its full sequence is uncharacterized protein (419 aa).

Cys-38, Cys-44, Cys-47, and Cys-126 together coordinate [4Fe-4S] cluster. Positions 250, 280, 301, and 346 each coordinate S-adenosyl-L-methionine. Cys-373 (nucleophile) is an active-site residue.

Belongs to the class I-like SAM-binding methyltransferase superfamily. RNA M5U methyltransferase family.

This is an uncharacterized protein from Prochlorococcus marinus (strain SARG / CCMP1375 / SS120).